A 394-amino-acid chain; its full sequence is Obg-like ATPase 1 (394 aa).

The region spanning 25–282 (LKIGIVGLPN…MAPDEAAKYC (258 aa)) is the OBG-type G domain. Residues 34-39 (NVGKST), 56-60 (FCTIE), and 94-97 (DIAG) contribute to the ATP site. Residues Ser-38 and Thr-58 each coordinate Mg(2+). GTP is bound at residue Phe-129. ATP is bound by residues 230 to 231 (NL), Leu-231, and 263 to 265 (SGV). GTP is bound at residue 263–265 (SGV). Residues 303–386 (NLIYFFTAGP…QDGDIIFFKF (84 aa)) enclose the TGS domain.

Belongs to the TRAFAC class OBG-HflX-like GTPase superfamily. OBG GTPase family. YchF/OLA1 subfamily. In terms of assembly, monomer (Potential). Interacts with CAR4/GAP1. Mg(2+) is required as a cofactor.

The protein resides in the cytoplasm. It is found in the cytosol. With respect to regulation, activated by GAP1. Functionally, hydrolyzes ATP, and can also hydrolyze GTP with lower efficiency. Has lower affinity for GTP (Potential). Exhibits GTPase activity. Confers sensitivity to salinity stress by suppressing the anti-oxidation enzymatic activities and increasing lipid peroxidation thus leading to the accumulation of reactive oxygen species (ROS). Acts as a negative regulator of disease resistance against bacterial pathogen. The polypeptide is Obg-like ATPase 1 (Arabidopsis thaliana (Mouse-ear cress)).